Here is a 684-residue protein sequence, read N- to C-terminus: Kelch repeat and BTB domain-containing protein 7 (684 aa).

The tract at residues 1–27 (MQSREDVPRSRRLASPRGGRRPKRISK) is disordered. Positions 10–26 (SRRLASPRGGRRPKRIS) are enriched in basic residues. Residue S29 is modified to Phosphoserine. The BTB domain maps to 63 to 138 (CDVTIEVVTP…CYTGRVSLSE (76 aa)). Kelch repeat units lie at residues 386 to 435 (AVCV…YLNG), 436 to 484 (YIYI…VVQN), 486 to 523 (LYAVNSKRMLCYDPSHNMWLNCASLKRSDFQEACVFND), 524 to 564 (EIYC…IVNH), and 567 to 616 (KLLL…CLCA). Residues 630–666 (ITEEDDARSESSTEWDLDGFSELDSESGSSSSFSDDE) are disordered. The segment covering 631–654 (TEEDDARSESSTEWDLDGFSELDS) has biased composition (acidic residues). An ATG8 interaction motif (AIM) motif is present at residues 668-671 (WVQV).

As to quaternary structure, core component of a BCR3 (BTB-CUL3-RBX1) E3 ubiquitin ligase complex, also named Cul3-RING ubiquitin ligase complex CUL3(KBTBD6/7), composed of CUL3, RBX1, KBTBD6 and KBTBD7. Interacts with GABARAP; the interaction is direct and is required for the ubiquitination of TIAM1. Interacts with GABARAPL1, GABARAPL2 and MAP1LC3B; the interaction is direct.

It is found in the cytoplasm. The protein localises to the nucleus. The protein operates within protein modification; protein ubiquitination. In terms of biological role, as part of the CUL3(KBTBD6/7) E3 ubiquitin ligase complex functions as a substrate adapter for the RAC1 guanine exchange factor (GEF) TIAM1, mediating its 'Lys-48' ubiquitination and proteasomal degradation. By controlling this ubiquitination, regulates RAC1 signal transduction and downstream biological processes including the organization of the cytoskeleton, cell migration and cell proliferation. Ubiquitination of TIAM1 requires the membrane-associated protein GABARAP which may restrict locally the activity of the complex. The chain is Kelch repeat and BTB domain-containing protein 7 from Homo sapiens (Human).